The chain runs to 148 residues: NADPH-dependent 7-cyano-7-deazaguanine reductase (148 aa).

Catalysis depends on Cys-50, which acts as the Thioimide intermediate. The active-site Proton donor is the Asp-57. Substrate contacts are provided by residues Val-72–Ser-74 and His-91–Glu-92.

Belongs to the GTP cyclohydrolase I family. QueF type 1 subfamily.

It is found in the cytoplasm. It catalyses the reaction 7-aminomethyl-7-carbaguanine + 2 NADP(+) = 7-cyano-7-deazaguanine + 2 NADPH + 3 H(+). Its pathway is tRNA modification; tRNA-queuosine biosynthesis. In terms of biological role, catalyzes the NADPH-dependent reduction of 7-cyano-7-deazaguanine (preQ0) to 7-aminomethyl-7-deazaguanine (preQ1). The polypeptide is NADPH-dependent 7-cyano-7-deazaguanine reductase (Helicobacter acinonychis (strain Sheeba)).